The chain runs to 194 residues: Phosphoheptose isomerase (194 aa).

Residues 37 to 194 (ISNSFKQGGK…LIEFEMAKQA (158 aa)) enclose the SIS domain. 52-54 (NGG) serves as a coordination point for substrate. 2 residues coordinate Zn(2+): His-61 and Glu-65. Substrate-binding positions include Glu-65, 93-94 (ND), 119-121 (STS), Ser-124, and Gln-172. The Zn(2+) site is built by Gln-172 and His-180.

Belongs to the SIS family. GmhA subfamily. Homotetramer. Zn(2+) serves as cofactor.

Its subcellular location is the cytoplasm. It catalyses the reaction 2 D-sedoheptulose 7-phosphate = D-glycero-alpha-D-manno-heptose 7-phosphate + D-glycero-beta-D-manno-heptose 7-phosphate. It participates in carbohydrate biosynthesis; D-glycero-D-manno-heptose 7-phosphate biosynthesis; D-glycero-alpha-D-manno-heptose 7-phosphate and D-glycero-beta-D-manno-heptose 7-phosphate from sedoheptulose 7-phosphate: step 1/1. Its function is as follows. Catalyzes the isomerization of sedoheptulose 7-phosphate in D-glycero-D-manno-heptose 7-phosphate. The polypeptide is Phosphoheptose isomerase (Actinobacillus pleuropneumoniae serotype 5b (strain L20)).